The primary structure comprises 190 residues: dCTP deaminase, dUMP-forming (190 aa).

Residues 101–106, Asp119, 127–129, Gln148, Tyr162, and Gln174 each bind dCTP; these read KSSLGR and TLE. The active-site Proton donor/acceptor is the Glu129. Positions 161–190 are disordered; sequence PYGSSSVGSKYQGQRGPTPSRSYQNFVKND. Residues 163 to 190 show a composition bias toward polar residues; the sequence is GSSSVGSKYQGQRGPTPSRSYQNFVKND.

Belongs to the dCTP deaminase family. As to quaternary structure, homotrimer.

It carries out the reaction dCTP + 2 H2O = dUMP + NH4(+) + diphosphate. Its pathway is pyrimidine metabolism; dUMP biosynthesis; dUMP from dCTP: step 1/1. Its function is as follows. Bifunctional enzyme that catalyzes both the deamination of dCTP to dUTP and the hydrolysis of dUTP to dUMP without releasing the toxic dUTP intermediate. The polypeptide is dCTP deaminase, dUMP-forming (Mycolicibacterium vanbaalenii (strain DSM 7251 / JCM 13017 / BCRC 16820 / KCTC 9966 / NRRL B-24157 / PYR-1) (Mycobacterium vanbaalenii)).